We begin with the raw amino-acid sequence, 341 residues long: Adenine deaminase (341 aa).

Positions 17, 19, and 197 each coordinate Zn(2+). The Proton donor role is filled by glutamate 200. Zn(2+) is bound at residue aspartate 278. Aspartate 279 is a binding site for substrate.

The protein belongs to the metallo-dependent hydrolases superfamily. Adenosine and AMP deaminases family. Adenine deaminase type 2 subfamily. Zn(2+) is required as a cofactor.

The enzyme catalyses adenine + H2O + H(+) = hypoxanthine + NH4(+). In terms of biological role, catalyzes the hydrolytic deamination of adenine to hypoxanthine. Plays an important role in the purine salvage pathway and in nitrogen catabolism. In Chlorobium luteolum (strain DSM 273 / BCRC 81028 / 2530) (Pelodictyon luteolum), this protein is Adenine deaminase.